Consider the following 688-residue polypeptide: Polyphosphate kinase (688 aa).

Asn-45 lines the ATP pocket. Arg-375 and Arg-405 together coordinate Mg(2+). Positions 430 to 464 constitute a PLD phosphodiesterase domain; sequence PGLKIHAKLFLISRKENGEVVRYAHIGTGNFNEKT. Residue His-435 is the Phosphohistidine intermediate of the active site. ATP contacts are provided by Tyr-468, Arg-564, and His-592.

The protein belongs to the polyphosphate kinase 1 (PPK1) family. It depends on Mg(2+) as a cofactor. An intermediate of this reaction is the autophosphorylated ppk in which a phosphate is covalently linked to a histidine residue through a N-P bond.

It catalyses the reaction [phosphate](n) + ATP = [phosphate](n+1) + ADP. Its function is as follows. Catalyzes the reversible transfer of the terminal phosphate of ATP to form a long-chain polyphosphate (polyP). The protein is Polyphosphate kinase of Escherichia coli O157:H7.